The sequence spans 352 residues: Phospho-N-acetylmuramoyl-pentapeptide-transferase (352 aa).

The next 10 helical transmembrane spans lie at 10-30 (YMFF…ALFL), 67-87 (TMGG…CADL), 88-108 (NNFY…IGLV), 129-149 (LLSQ…MGIN), 159-179 (YALF…IISS), 191-211 (GLAT…LYLS), 227-247 (GLGE…GFLW), 255-275 (VFMG…LGIV), 280-300 (ILLL…ILQV), and 329-349 (KIIV…LISI).

Belongs to the glycosyltransferase 4 family. MraY subfamily. Requires Mg(2+) as cofactor.

The protein localises to the cell inner membrane. It catalyses the reaction UDP-N-acetyl-alpha-D-muramoyl-L-alanyl-gamma-D-glutamyl-meso-2,6-diaminopimeloyl-D-alanyl-D-alanine + di-trans,octa-cis-undecaprenyl phosphate = di-trans,octa-cis-undecaprenyl diphospho-N-acetyl-alpha-D-muramoyl-L-alanyl-D-glutamyl-meso-2,6-diaminopimeloyl-D-alanyl-D-alanine + UMP. The protein operates within cell wall biogenesis; peptidoglycan biosynthesis. In terms of biological role, catalyzes the initial step of the lipid cycle reactions in the biosynthesis of the cell wall peptidoglycan: transfers peptidoglycan precursor phospho-MurNAc-pentapeptide from UDP-MurNAc-pentapeptide onto the lipid carrier undecaprenyl phosphate, yielding undecaprenyl-pyrophosphoryl-MurNAc-pentapeptide, known as lipid I. The chain is Phospho-N-acetylmuramoyl-pentapeptide-transferase from Campylobacter lari (strain RM2100 / D67 / ATCC BAA-1060).